Reading from the N-terminus, the 344-residue chain is Phenylalanine--tRNA ligase alpha subunit (344 aa).

E261 serves as a coordination point for Mg(2+).

This sequence belongs to the class-II aminoacyl-tRNA synthetase family. Phe-tRNA synthetase alpha subunit type 1 subfamily. As to quaternary structure, tetramer of two alpha and two beta subunits. The cofactor is Mg(2+).

It is found in the cytoplasm. It catalyses the reaction tRNA(Phe) + L-phenylalanine + ATP = L-phenylalanyl-tRNA(Phe) + AMP + diphosphate + H(+). This is Phenylalanine--tRNA ligase alpha subunit from Ehrlichia ruminantium (strain Gardel).